Here is a 206-residue protein sequence, read N- to C-terminus: LexA repressor (206 aa).

Residues 28 to 48 constitute a DNA-binding region (H-T-H motif); it reads RAEIARELGFRSANAAEEHLK. Active-site for autocatalytic cleavage activity residues include serine 123 and lysine 160.

This sequence belongs to the peptidase S24 family. Homodimer.

The catalysed reaction is Hydrolysis of Ala-|-Gly bond in repressor LexA.. In terms of biological role, represses a number of genes involved in the response to DNA damage (SOS response), including recA and lexA. In the presence of single-stranded DNA, RecA interacts with LexA causing an autocatalytic cleavage which disrupts the DNA-binding part of LexA, leading to derepression of the SOS regulon and eventually DNA repair. In Vibrio campbellii (strain ATCC BAA-1116), this protein is LexA repressor.